The chain runs to 743 residues: ABC-type transporter claG (743 aa).

Asn-4 and Asn-30 each carry an N-linked (GlcNAc...) asparagine glycan. Residues 124–144 (SILLDIFLVIVVSWPFPFAWI) form a helical membrane-spanning segment. A glycan (N-linked (GlcNAc...) asparagine) is linked at Asn-159. The ABC transporter domain occupies 200 to 439 (VEFSGISMRP…FQDAGYTFPL (240 aa)). 234–241 (GPSGSGKS) serves as a coordination point for ATP. 5 consecutive transmembrane segments (helical) span residues 507–527 (YPSF…IGLS), 560–580 (GMLL…KTFG), 611–631 (IFLS…PIVS), 636–656 (LIVN…ISAI), and 661–681 (NGPL…GCAP).

It belongs to the ABC transporter superfamily. ABCG family.

It localises to the membrane. Functionally, ABC-type transporter; part of the cla gene cluster that produces clavatol and ortho-quinone methide. The clavatol biosynthesis cluster cla and the terrestric acid cluster tra are both involved in the production of peniphenones and penilactones. The chain is ABC-type transporter claG from Penicillium crustosum (Blue mold fungus).